The chain runs to 194 residues: Protein GrpE (194 aa).

The tract at residues 1 to 53 (MVENEKTSVEETEEKAETEDEMLTEDPSNEDSDEANEEGNELSEEEKRIAELE) is disordered. Residues 10–44 (EETEEKAETEDEMLTEDPSNEDSDEANEEGNELSE) are compositionally biased toward acidic residues.

This sequence belongs to the GrpE family. As to quaternary structure, homodimer.

Its subcellular location is the cytoplasm. Participates actively in the response to hyperosmotic and heat shock by preventing the aggregation of stress-denatured proteins, in association with DnaK and GrpE. It is the nucleotide exchange factor for DnaK and may function as a thermosensor. Unfolded proteins bind initially to DnaJ; upon interaction with the DnaJ-bound protein, DnaK hydrolyzes its bound ATP, resulting in the formation of a stable complex. GrpE releases ADP from DnaK; ATP binding to DnaK triggers the release of the substrate protein, thus completing the reaction cycle. Several rounds of ATP-dependent interactions between DnaJ, DnaK and GrpE are required for fully efficient folding. This Halalkalibacterium halodurans (strain ATCC BAA-125 / DSM 18197 / FERM 7344 / JCM 9153 / C-125) (Bacillus halodurans) protein is Protein GrpE.